The primary structure comprises 363 residues: Neutral protease 2 homolog MEP7 (363 aa).

Positions 1 to 19 are cleaved as a signal peptide; sequence MLLCSMVAALAALATPAFS. A propeptide spanning residues 20 to 181 is cleaved from the precursor; it reads CALPHLDLPE…ARAIQPLDRR (162 aa). Intrachain disulfides connect cysteine 187–cysteine 259 and cysteine 266–cysteine 284. Histidine 308 is a binding site for Zn(2+). Glutamate 309 is a catalytic residue. Zn(2+) contacts are provided by histidine 312 and aspartate 323.

This sequence belongs to the peptidase M35 family. Zn(2+) is required as a cofactor.

It is found in the secreted. It catalyses the reaction Preferential cleavage of bonds with hydrophobic residues in P1'. Also 3-Asn-|-Gln-4 and 8-Gly-|-Ser-9 bonds in insulin B chain.. Its function is as follows. Secreted metalloproteinase that allows assimilation of proteinaceous substrates. Shows high activities on basic nuclear substrates such as histone and protamine. May be involved in virulence. This chain is Neutral protease 2 homolog MEP7 (MEP7), found in Coccidioides posadasii (strain C735) (Valley fever fungus).